The sequence spans 386 residues: Protein U3 (386 aa).

This is Protein U3 (U3) from Human herpesvirus 6B (strain Z29) (HHV-6 variant B).